A 484-amino-acid polypeptide reads, in one-letter code: Pre-glycoprotein polyprotein GP complex (484 aa).

A lipid anchor (N-myristoyl glycine; by host) is attached at G2. The Extracellular segment spans residues 2–17 (GQLVSFFQEIPNIIQE). A helical membrane pass occupies residues 18–33 (AINIALIAVSLIAILK). The Cytoplasmic segment spans residues 34–58 (GLVNLWKSGLFQLLVFLILAGRSCS). C57 is a binding site for Zn(2+). The Extracellular segment spans residues 59–423 (FKIGRSTELQ…QGKTPITLVD (365 aa)). Disulfide bonds link C85–C225, C270–C283, C292–C301, and C355–C376. N88, N125, N178, and N218 each carry an N-linked (GlcNAc...) asparagine; by host glycan. Residues N356, N364, N381, and N386 are each glycosylated (N-linked (GlcNAc...) asparagine; by host). Residues 424-444 (ICFWSTLFFTTTLFLHLVGFP) traverse the membrane as a helical segment. The Cytoplasmic portion of the chain corresponds to 445–484 (THRHIQGEPCPLPHKLNSNGGCRCGRYPELKKPTTWHRKH). Zn(2+)-binding residues include H446, H448, C454, H458, C466, C468, and H484.

This sequence belongs to the arenaviridae GPC protein family. As to quaternary structure, interacts with glycoprotein G2. Part of the GP complex (GP-C) together with glycoprotein G1 and glycoprotein G2. The GP-complex interacts with protein Z, which interacts with ribonucleocapsid; these interactions may induce virion budding. Homotrimer; disulfide-linked. In pre-fusion state, G1 homotrimers bind G2 homotrimers via ionic interactions. Part of the GP complex (GP-C) together with glycoprotein G2 and the stable signal peptide. The GP-complex interacts with protein Z, which interacts with ribonucleocapsid; these interactions may induce virion budding. In terms of assembly, homotrimer. Interacts with the stable signal peptide. In pre-fusion state, G2 homotrimers bind G1 homotrimers via ionic interactions. Part of the GP complex (GP-C) together with glycoprotein G1 and the stable signal peptide. Acidification in the endosome triggers rearrangements, which ultimately leads to a 6 helix bundle formed by the two heptad repeat domains (HR1 and HR2) in post-fusion state. The GP-complex interacts with protein Z, which interacts with ribonucleocapsid; these interactions may induce virion budding. In terms of processing, specific enzymatic cleavages in vivo yield mature proteins. GP-C polyprotein is cleaved in the endoplasmic reticulum by the host protease MBTPS1. Only cleaved glycoprotein is incorporated into virions. Post-translationally, the SSP remains stably associated with the GP complex following cleavage by signal peptidase and plays crucial roles in the trafficking of GP through the secretory pathway. Myristoylation is necessary for GP2-mediated fusion activity.

It localises to the virion membrane. The protein localises to the host endoplasmic reticulum membrane. It is found in the host Golgi apparatus membrane. The protein resides in the host cell membrane. Its function is as follows. Functions as a cleaved signal peptide that is retained as the third component of the GP complex (GP-C). Helps to stabilize the spike complex in its native conformation. The SSP is required for efficient glycoprotein expression, post-translational maturation cleavage of G1 and G2, glycoprotein transport to the cell surface plasma membrane, formation of infectious virus particles, and acid pH-dependent glycoprotein-mediated cell fusion. In terms of biological role, glycoprotein G1: Forms the virion spikes together with glycoprotein G2. The glycoprotein spike trimers are connected to the underlying matrix. Interacts with the host receptor leading to virus endocytosis. Functionally, forms the virion spikes together with glycoprotein G1. The glycoprotein spike trimers are connected to the underlying matrix. Class I viral fusion protein that directs fusion of viral and host endosomal membranes, leading to delivery of the nucleocapsid into the cytoplasm. Membrane fusion is mediated by irreversible conformational changes induced by acidification. In Chapare mammarenavirus (isolate Human/Bolivia/810419/2003), this protein is Pre-glycoprotein polyprotein GP complex.